Reading from the N-terminus, the 827-residue chain is Glycerol-3-phosphate acyltransferase (827 aa).

Positions 325–330 match the HXXXXD motif motif; sequence CHRSHM.

It belongs to the GPAT/DAPAT family.

The protein localises to the cell inner membrane. The catalysed reaction is sn-glycerol 3-phosphate + an acyl-CoA = a 1-acyl-sn-glycero-3-phosphate + CoA. It functions in the pathway phospholipid metabolism; CDP-diacylglycerol biosynthesis; CDP-diacylglycerol from sn-glycerol 3-phosphate: step 1/3. The chain is Glycerol-3-phosphate acyltransferase from Shigella dysenteriae serotype 1 (strain Sd197).